The chain runs to 130 residues: Holo-[acyl-carrier-protein] synthase (130 aa).

Asp9 and Glu58 together coordinate Mg(2+).

This sequence belongs to the P-Pant transferase superfamily. AcpS family. Requires Mg(2+) as cofactor.

It is found in the cytoplasm. It carries out the reaction apo-[ACP] + CoA = holo-[ACP] + adenosine 3',5'-bisphosphate + H(+). Transfers the 4'-phosphopantetheine moiety from coenzyme A to a Ser of acyl-carrier-protein. The chain is Holo-[acyl-carrier-protein] synthase from Mycobacterium bovis (strain ATCC BAA-935 / AF2122/97).